The primary structure comprises 118 residues: MVARVWSLMRFLIKGSVAGGAVYLVYDQELLGPSDKSQAALQKAGEVVPPAVYQFSQYVCQQTGLQIPQLPAPPKIYFPIRDSWNAGIMTVMSALSVAPSKAREYSKEGWEYVKARTK.

Topologically, residues 1-7 are mitochondrial matrix; that stretch reads MVARVWS. A helical membrane pass occupies residues 8–26; that stretch reads LMRFLIKGSVAGGAVYLVY. Residues 27–118 lie on the Mitochondrial intermembrane side of the membrane; it reads DQELLGPSDK…GWEYVKARTK (92 aa).

This sequence belongs to the MICOS complex subunit Mic13 family. Component of the mitochondrial contact site and cristae organizing system (MICOS) complex, composed of at least MICOS10/MIC10, CHCHD3/MIC19, CHCHD6/MIC25, APOO/MIC26, MICOS13/MIC13, APOOL/MIC27 and IMMT/MIC60. The complex associates with mitochondrial outer membrane proteins SAMM50, MTX1 and MTX2, and with HSPA9.

It localises to the mitochondrion inner membrane. Component of the MICOS complex, a large protein complex of the mitochondrial inner membrane that plays crucial roles in the maintenance of crista junctions, inner membrane architecture, and formation of contact sites to the outer membrane. Constituent of mature MICOS complex, it is required for the formation of cristae junction (CJ) and maintenance of cristae morphology. Required for the incorporation of MICOS10/MIC10 into the MICOS complex. In Macaca fascicularis (Crab-eating macaque), this protein is MICOS complex subunit MIC13.